The primary structure comprises 486 residues: tRNA (uracil-5-)-methyltransferase homolog B (486 aa).

S-adenosyl-L-methionine is bound by residues glutamine 305, glutamate 355, and asparagine 405. Residue cysteine 433 is the Nucleophile of the active site. The active-site Proton acceptor is glutamate 479.

It belongs to the class I-like SAM-binding methyltransferase superfamily. RNA M5U methyltransferase family.

It is found in the mitochondrion matrix. The catalysed reaction is uridine(54) in tRNA + S-adenosyl-L-methionine = 5-methyluridine(54) in tRNA + S-adenosyl-L-homocysteine + H(+). It carries out the reaction a uridine in 12S rRNA + S-adenosyl-L-methionine = a 5-methyluridine in 12S rRNA + S-adenosyl-L-homocysteine + H(+). Its function is as follows. Mitochondrial S-adenosyl-L-methionine-dependent methyltransferase that catalyzes the formation of 5-methyl-uridine in tRNAs and 12S rRNA. Catalyzes the methylation of uridine at position 54 (m5U54) in all tRNAs. Specifically methylates the uridine in position 429 of 12S rRNA (m5U429). Does not affect RNA stability or mitochondrial translation. This chain is tRNA (uracil-5-)-methyltransferase homolog B (TRMT2B), found in Pongo abelii (Sumatran orangutan).